The chain runs to 501 residues: Putative zinc metalloprotease TM_0890 (501 aa).

His-17 serves as a coordination point for Zn(2+). Residue Glu-18 is part of the active site. His-21 contributes to the Zn(2+) binding site. 4 helical membrane passes run 93–115 (FLIT…LPIT), 401–420 (VQTG…SAAS), 427–449 (VLTV…LPAL), and 474–496 (IIHF…LDIG). Residues 96–180 (TLAGPLFSIL…LVIIRNGEKK (85 aa)) form the PDZ domain.

It belongs to the peptidase M50B family. Zn(2+) serves as cofactor.

It localises to the cell inner membrane. The protein is Putative zinc metalloprotease TM_0890 of Thermotoga maritima (strain ATCC 43589 / DSM 3109 / JCM 10099 / NBRC 100826 / MSB8).